A 429-amino-acid chain; its full sequence is Palmitoyltransferase SWF1 (429 aa).

Residues 1–3 (MGT) are Lumenal-facing. A helical membrane pass occupies residues 4 to 24 (IAIIAAVILGISFMTFVAFFG). Topologically, residues 25-79 (RLPALRNTPISFLHRLIWIHLPNGILTVDRTLTNGRLTTSLTRLGRHLWYDQHPT) are cytoplasmic. The chain crosses the membrane as a helical span at residues 80 to 100 (ILIFFFLLLSVGEYLYLPVAW). Over 101–112 (PHFSFTHKFFGT) the chain is Lumenal. A helical transmembrane segment spans residues 113–133 (IAILCPYIFLYLSAYTDPGVI). At 134 to 201 (NAKTHVREMA…CVGANNQRWF (68 aa)) the chain is on the cytoplasmic side. The DHHC domain maps to 156-206 (TSCETCHLLKPARSKHCSICKKCVGRMDHHCIFINNCVGANNQRWFILLLL). Residues 202–222 (ILLLLSTAILTLYGGVLGLVI) traverse the membrane as a helical segment. Residues 223 to 274 (IRAKIQARFPYWTLMPWWTSTQAWNSGDLDFHRWLLLWSWGLQSGVAMGGVT) lie on the Lumenal side of the membrane. The chain crosses the membrane as a helical span at residues 275-295 (LLALLTTPLVWGLLGYHLWLV). Over 296–429 (YCGTTTNESM…ERGRNRRRSS (134 aa)) the chain is Cytoplasmic. The span at 408 to 421 (GRSPVDEREFGRER) shows a compositional bias: basic and acidic residues. The interval 408–429 (GRSPVDEREFGRERGRNRRRSS) is disordered.

The protein belongs to the DHHC palmitoyltransferase family. SWF1 subfamily.

The protein localises to the endoplasmic reticulum membrane. It catalyses the reaction L-cysteinyl-[protein] + hexadecanoyl-CoA = S-hexadecanoyl-L-cysteinyl-[protein] + CoA. Its function is as follows. Palmitoyltransferase that targets several endosomal SNAREs. Palmitoylates the SNAREs at cysteine residues close to the cytoplasmic end of their transmembrane domain. May have a role in the cellular quality control of transmembrane domain-containing proteins. The chain is Palmitoyltransferase SWF1 (swf-1) from Neurospora crassa (strain ATCC 24698 / 74-OR23-1A / CBS 708.71 / DSM 1257 / FGSC 987).